A 312-amino-acid polypeptide reads, in one-letter code: Malate dehydrogenase (312 aa).

Residues 10-15 and aspartate 34 contribute to the NAD(+) site; that span reads GAGNTG. Arginine 85 and arginine 91 together coordinate substrate. NAD(+)-binding positions include asparagine 98 and 121-123; that span reads LTN. Substrate-binding residues include asparagine 123 and arginine 154. Histidine 178 serves as the catalytic Proton acceptor.

This sequence belongs to the LDH/MDH superfamily. MDH type 3 family.

The enzyme catalyses (S)-malate + NAD(+) = oxaloacetate + NADH + H(+). Its function is as follows. Catalyzes the reversible oxidation of malate to oxaloacetate. This chain is Malate dehydrogenase, found in Staphylococcus saprophyticus subsp. saprophyticus (strain ATCC 15305 / DSM 20229 / NCIMB 8711 / NCTC 7292 / S-41).